We begin with the raw amino-acid sequence, 1381 residues long: Hepatocyte growth factor receptor (1381 aa).

The first 24 residues, 1–24 (MKAPAVLAPGILMLLFTLVQRSNG), serve as a signal peptide directing secretion. Topologically, residues 25-932 (ECKEALAKSE…VIVQPDQNFT (908 aa)) are extracellular. The region spanning 27 to 515 (KEALAKSEMN…TGKKITKIPL (489 aa)) is the Sema domain. The N-linked (GlcNAc...) asparagine glycan is linked to Asn-45. Cystine bridges form between Cys-95–Cys-101, Cys-98–Cys-160, Cys-133–Cys-141, and Cys-172–Cys-175. An N-linked (GlcNAc...) asparagine glycan is attached at Asn-106. N-linked (GlcNAc...) asparagine glycosylation is present at Asn-149. Asn-202 carries an N-linked (GlcNAc...) asparagine glycan. 2 disulfide bridges follow: Cys-298–Cys-363 and Cys-385–Cys-397. 2 N-linked (GlcNAc...) asparagine glycosylation sites follow: Asn-399 and Asn-405. Disulfide bonds link Cys-520/Cys-538, Cys-526/Cys-561, Cys-529/Cys-545, and Cys-541/Cys-551. IPT/TIG domains follow at residues 563–655 (PAIY…FSYV), 657–739 (PIIT…FSYR), and 742–836 (PIVY…LIYV). The O-linked (Man) threonine glycan is linked to Thr-582. N-linked (GlcNAc...) asparagine glycosylation is found at Asn-607 and Asn-635. 2 O-linked (Man) threonine glycosylation sites follow: Thr-676 and Thr-761. Residues Asn-785, Asn-879, and Asn-930 are each glycosylated (N-linked (GlcNAc...) asparagine). A helical transmembrane segment spans residues 933–955 (GLIAGVVSISIALLLLLGLFLWL). Over 956–1381 (KKRKQIKDLG…EDNADDEVDT (426 aa)) the chain is Cytoplasmic. Ser-966 is modified (phosphoserine). A Phosphothreonine modification is found at Thr-977. 3 positions are modified to phosphoserine: Ser-990, Ser-997, and Ser-1000. The residue at position 1003 (Tyr-1003) is a Phosphotyrosine. In terms of domain architecture, Protein kinase spans 1078–1345 (VHFNEVIGRG…RISAIFSTFI (268 aa)). Residues 1084–1092 (IGRGHFGCV) and Lys-1110 each bind ATP. Asp-1204 serves as the catalytic Proton acceptor. The interval 1212–1381 (LDEKFTVKVA…EDNADDEVDT (170 aa)) is interaction with RANBP9. Residue Tyr-1230 is modified to Phosphotyrosine. Phosphotyrosine; by autocatalysis is present on residues Tyr-1234 and Tyr-1235. Thr-1289 bears the Phosphothreonine mark. The interaction with MUC20 stretch occupies residues 1320-1359 (WHPKAEMRPSFSELVSRISAIFSTFIGEHYVHVNATYVNV). A phosphotyrosine; by autocatalysis mark is found at Tyr-1349 and Tyr-1356. A Phosphotyrosine modification is found at Tyr-1365.

Belongs to the protein kinase superfamily. Tyr protein kinase family. Heterodimer made of an alpha chain (50 kDa) and a beta chain (145 kDa) which are disulfide linked. Binds PLXNB1. Interacts when phosphorylated with downstream effectors including STAT3, PIK3R1, SRC, PCLG1, GRB2 and GAB1. Interacts with SPSB1, SPSB2 and SPSB4. Interacts with INPP5D/SHIP1. When phosphorylated at Tyr-1356, interacts with INPPL1/SHIP2. Interacts with RANBP9 and RANBP10, as well as SPSB1, SPSB2, SPSB3 and SPSB4. SPSB1 binding occurs in the presence and in the absence of HGF, however HGF treatment has a positive effect on this interaction. Interacts with MUC20; prevents interaction with GRB2 and suppresses hepatocyte growth factor-induced cell proliferation. Interacts with GRB10. Interacts with PTPN1 and PTPN2. Interacts with HSP90AA1 and HSP90AB1; the interaction suppresses MET kinase activity. Interacts with tensin TNS3. Interacts (when phosphorylated) with tensin TNS4 (via SH2 domain); the interaction increases MET protein stability by inhibiting MET endocytosis and subsequent lysosomal degradation. As to quaternary structure, (Microbial infection) Immunoprecipitates with L.monocytogenes InlB. InlB probably dimerizes upon binding to MET, which encourages subsequent dimerization of MET. Autophosphorylated in response to ligand binding on Tyr-1234 and Tyr-1235 in the kinase domain leading to further phosphorylation of Tyr-1349 and Tyr-1356 in the C-terminal multifunctional docking site. Dephosphorylated by PTPRJ at Tyr-1349 and Tyr-1365. Dephosphorylated by PTPN1 and PTPN2. Post-translationally, ubiquitinated. Ubiquitination by CBL regulates the receptor stability and activity through proteasomal degradation. In terms of processing, O-mannosylation of IPT/TIG domains by TMEM260 is required for protein maturation. O-mannosylated residues are composed of single mannose glycans that are not elongated or modified. (Microbial infection) Tyrosine phosphorylation is stimulated by L.monocytogenes InlB.

The protein localises to the membrane. It catalyses the reaction L-tyrosyl-[protein] + ATP = O-phospho-L-tyrosyl-[protein] + ADP + H(+). With respect to regulation, in its inactive state, the C-terminal tail interacts with the catalytic domain and inhibits the kinase activity. Upon ligand binding, the C-terminal tail is displaced and becomes phosphorylated, thus increasing the kinase activity. Receptor tyrosine kinase that transduces signals from the extracellular matrix into the cytoplasm by binding to hepatocyte growth factor/HGF ligand. Regulates many physiological processes including proliferation, scattering, morphogenesis and survival. Ligand binding at the cell surface induces autophosphorylation of MET on its intracellular domain that provides docking sites for downstream signaling molecules. Following activation by ligand, interacts with the PI3-kinase subunit PIK3R1, PLCG1, SRC, GRB2, STAT3 or the adapter GAB1. Recruitment of these downstream effectors by MET leads to the activation of several signaling cascades including the RAS-ERK, PI3 kinase-AKT, or PLCgamma-PKC. The RAS-ERK activation is associated with the morphogenetic effects while PI3K/AKT coordinates prosurvival effects. During embryonic development, MET signaling plays a role in gastrulation, development and migration of muscles and neuronal precursors, angiogenesis and kidney formation. In adults, participates in wound healing as well as organ regeneration and tissue remodeling. Also promotes differentiation and proliferation of hematopoietic cells. Its function is as follows. (Microbial infection) Acts as a receptor for Listeria monocytogenes internalin InlB, mediating entry of the pathogen into cells. The chain is Hepatocyte growth factor receptor (MET) from Chlorocebus aethiops (Green monkey).